The primary structure comprises 303 residues: Methionyl-tRNA formyltransferase (303 aa).

108-111 (SDLP) is a binding site for (6S)-5,6,7,8-tetrahydrofolate.

This sequence belongs to the Fmt family.

The enzyme catalyses L-methionyl-tRNA(fMet) + (6R)-10-formyltetrahydrofolate = N-formyl-L-methionyl-tRNA(fMet) + (6S)-5,6,7,8-tetrahydrofolate + H(+). Its function is as follows. Attaches a formyl group to the free amino group of methionyl-tRNA(fMet). The formyl group appears to play a dual role in the initiator identity of N-formylmethionyl-tRNA by promoting its recognition by IF2 and preventing the misappropriation of this tRNA by the elongation apparatus. This chain is Methionyl-tRNA formyltransferase, found in Rickettsia typhi (strain ATCC VR-144 / Wilmington).